Reading from the N-terminus, the 661-residue chain is CD180 antigen (661 aa).

The first 23 residues, M1–S23, serve as a signal peptide directing secretion. The Extracellular portion of the chain corresponds to W24 to G626. The 21-residue stretch at A33–N53 folds into the LRRNT domain. N34, N53, N70, and N78 each carry an N-linked (GlcNAc...) asparagine glycan. LRR repeat units follow at residues T54–R75, N78–S99, Q102–G123, S126–N147, N150–P171, N174–S195, and N201–S221. 3 N-linked (GlcNAc...) asparagine glycosylation sites follow: N201, N234, and N244. 5 LRR repeats span residues S275 to C296, Q299 to L320, L322 to N343, S346 to L366, and N371 to Q391. N394 and N402 each carry an N-linked (GlcNAc...) asparagine glycan. LRR repeat units lie at residues H397–E418, Q421–Q442, F446–A466, V470–Q493, S497–S518, K521–K544, and I546–P564. N-linked (GlcNAc...) asparagine glycosylation is present at N451. A glycan (N-linked (GlcNAc...) asparagine) is linked at N573. Positions N577 to I627 constitute an LRRCT domain. A helical membrane pass occupies residues I627 to V650. At K651–I661 the chain is on the cytoplasmic side.

This sequence belongs to the Toll-like receptor family. M-shaped tetramer of two CD180-LY86 heterodimers. Expressed mainly on mature peripherical B cells. Detected in spleen, lymph node and appendix. Not detected in pre-B and -T cells.

It localises to the cell membrane. Its function is as follows. May cooperate with MD-1 and TLR4 to mediate the innate immune response to bacterial lipopolysaccharide (LPS) in B-cells. Leads to NF-kappa-B activation. Also involved in the life/death decision of B-cells. The polypeptide is CD180 antigen (CD180) (Homo sapiens (Human)).